Here is a 144-residue protein sequence, read N- to C-terminus: Monooxygenase ptaG (144 aa).

This sequence belongs to the avfA family.

The protein operates within secondary metabolite biosynthesis. Functionally, monooxygenase; part of the gene cluster that mediates the biosynthesis of pestheic acid, a diphenyl ether which is a biosynthetic precursor of the unique chloropupukeananes. The biosynthesis initiates from condensation of acetate and malonate units catalyzed by the non-reducing PKS ptaA. As the ptaA protein is TE/CLC domain-deficient, hydrolysis and Claisen cyclization of the polyketide could be catalyzed by ptaB containing a beta-lactamase domain. The ptaB protein might hydrolyze the thioester bond between the ACP of ptaA and the intermediate to release atrochrysone carboxylic acid, which is spontaneously dehydrated to form endocrocin anthrone. Endocrocin anthrone is then converted to endocrocin, catalyzed by the anthrone oxygenase ptaC. Spontaneous decarboxylation of endocrocin occurs to generate emodin. An O-methyltransferase (ptaH or ptaI) could methylate emodin to form physcion. PtaJ could then catalyze the oxidative cleavage of physcion, and rotation of the intermediate could then afford desmethylisosulochrin. PtaF, a putative NADH-dependent oxidoreductase, might also participate in the oxidative cleavage step. Desmethylisosulochrin is then transformed by another O-methyltransferase (ptaH or ptaI) to form isosulochrin. Chlorination of isosulochrin by ptaM in the cyclohexadienone B ring then produces chloroisosulochrin. PtaE is responsible for the oxidative coupling reactions of both benzophenones isosulochrin and chloroisosulochrin to RES-1214-1 and pestheic acid respectively, regardless of chlorination. This is Monooxygenase ptaG from Pestalotiopsis fici (strain W106-1 / CGMCC3.15140).